An 89-amino-acid polypeptide reads, in one-letter code: Small ribosomal subunit protein uS15 (89 aa).

The protein belongs to the universal ribosomal protein uS15 family. In terms of assembly, part of the 30S ribosomal subunit. Forms a bridge to the 50S subunit in the 70S ribosome, contacting the 23S rRNA.

Its function is as follows. One of the primary rRNA binding proteins, it binds directly to 16S rRNA where it helps nucleate assembly of the platform of the 30S subunit by binding and bridging several RNA helices of the 16S rRNA. Functionally, forms an intersubunit bridge (bridge B4) with the 23S rRNA of the 50S subunit in the ribosome. The sequence is that of Small ribosomal subunit protein uS15 from Protochlamydia amoebophila (strain UWE25).